A 31-amino-acid chain; its full sequence is Cliotide T13 (31 aa).

The cyclopeptide (Asp-Asn) cross-link spans 1 to 31; sequence DTTPCGESCVWIPCVSSIVGCSCQNKVCYQN. 3 disulfides stabilise this stretch: C5–C21, C9–C23, and C14–C28.

Contains 3 disulfide bonds. In terms of processing, this is a cyclic peptide. As to expression, expressed in seed but not in root nodules.

Its function is as follows. Probably participates in a plant defense mechanism. Not active against Gram-negative bacterium E.coli ATCC 700926 or Gram-positive bacterium S.aureus ATCC 12600 up to a concentration of 100 uM under low-salt conditions. The polypeptide is Cliotide T13 (Clitoria ternatea (Butterfly pea)).